Reading from the N-terminus, the 196-residue chain is Flagellin B2 (196 aa).

The propeptide occupies 1–12; it reads MFEFITDEDERG.

The protein belongs to the archaeal flagellin family. In terms of processing, glycosylated.

Its subcellular location is the archaeal flagellum. Functionally, flagellin is the subunit protein which polymerizes to form the filaments of archaeal flagella. This is Flagellin B2 (flaB2) from Halobacterium salinarum (strain ATCC 700922 / JCM 11081 / NRC-1) (Halobacterium halobium).